The following is a 94-amino-acid chain: Large ribosomal subunit protein bL25 (94 aa).

This sequence belongs to the bacterial ribosomal protein bL25 family. As to quaternary structure, part of the 50S ribosomal subunit; part of the 5S rRNA/L5/L18/L25 subcomplex. Contacts the 5S rRNA. Binds to the 5S rRNA independently of L5 and L18.

Functionally, this is one of the proteins that binds to the 5S RNA in the ribosome where it forms part of the central protuberance. The protein is Large ribosomal subunit protein bL25 of Shigella boydii serotype 4 (strain Sb227).